We begin with the raw amino-acid sequence, 551 residues long: Glucose-6-phosphate isomerase (551 aa).

Glu356 acts as the Proton donor in catalysis. Active-site residues include His387 and Lys515.

This sequence belongs to the GPI family.

Its subcellular location is the cytoplasm. It catalyses the reaction alpha-D-glucose 6-phosphate = beta-D-fructose 6-phosphate. It functions in the pathway carbohydrate biosynthesis; gluconeogenesis. Its pathway is carbohydrate degradation; glycolysis; D-glyceraldehyde 3-phosphate and glycerone phosphate from D-glucose: step 2/4. In terms of biological role, catalyzes the reversible isomerization of glucose-6-phosphate to fructose-6-phosphate. The protein is Glucose-6-phosphate isomerase of Blochmanniella pennsylvanica (strain BPEN).